A 546-amino-acid polypeptide reads, in one-letter code: MTASKKLTGCQAWKALAAHRRNWKLHLRDLFAGDPGRGERMTAEAVGLFLDYSKNFVTDETLKLLLRLAEETGLRGRIEALFRGEKINLTENRAALHVALRSPKGTSIVVDGENVVPQVHDVLDRMAAFAVQVRSGSWKGHSGKGIRNVVNIGIGGSDLGPVMAYEALKYYSDRSLTFRFVSNIDGTDFAEAVQDLDAAETLFIVASKTFTTLETMTNASTARAWLLQGFKGDEKAVAKHFVAVSTNTAEVAKFGIDTANMFGFWNWVGGRYSMDSAIGLSTMLAIGPDNFRDMLAGFHAMDVHFRTAPFGVNLPVLMGLLTIWYNNFFAAETVAVLPYEQYLKRFPAYLQQLTMESNGKRVTLDGMEVDYQTSPIYWGEPGTNGQHSFYQLIHQGTKLIPCDFIAFVEPLHPLGRHHDLLMANVFAQAEALAFGRTLEEVTSEGIPAWLAPHKVFEGNRPSNTILAQRLTPETLGKLVALYEHSVFTQSAIWNINPFDQWGVELGKVLAQRVITELESREEPELGHDSSTNAMIRRYRKFRERME.

Glu356 acts as the Proton donor in catalysis. Catalysis depends on residues His387 and Lys507.

This sequence belongs to the GPI family.

The protein resides in the cytoplasm. It catalyses the reaction alpha-D-glucose 6-phosphate = beta-D-fructose 6-phosphate. It participates in carbohydrate biosynthesis; gluconeogenesis. The protein operates within carbohydrate degradation; glycolysis; D-glyceraldehyde 3-phosphate and glycerone phosphate from D-glucose: step 2/4. In terms of biological role, catalyzes the reversible isomerization of glucose-6-phosphate to fructose-6-phosphate. This chain is Glucose-6-phosphate isomerase, found in Syntrophus aciditrophicus (strain SB).